The sequence spans 804 residues: MQVSLRWLKDYVDIDLTPAEVSDRLTMAGLEVDAVREVGPSFSNVVVARIIALRRHPNADKLSLCEVTTGDETLPIVCGAPNIHVGDVVPLARIGAEIPGGYTIKRSKIRGELSEGMLCSEEELGIGEDTTGVMILPPNLPLGEDLADVLDLKDTVFDIGITPNRSDCLSIIGVAREIAAITGKPLKLPEIYVTENAEDIQVSASVQILDPDLCPHYTARMIRDVVVGPSPQWMRLRLEAVGLRSISNVVDVTNFVMMELGQPLHAFDYRFLEEGRIVVRRSTEGEKFISLDEKERVLNANTLMICDGVKPVAIAGIMGGFNSEIKPDTRDILLESAYFAPSSIRRSARDLGMSTDAAFRFERGIDPEGVLRALDRAAQLIAELSGGKICKGRIDEHPKPVETVGEIHLRCRKVNSLLGTNIPAAEMADILRGLGMEVTAKEGTVEEYRIKPPSFRVDIGREIDLVEEIARIHGYDNIPVSLPVGAMEPVPRDRRKILEERLRRHLAGTGFSEVITYSFVSPTAADILALDAGDERRKVVRIKNPLTEDQSVMRTTLIYSLLKVMQENANAGDYDLKIFEIGKIFLQGNTGGLPTEKKRLACLMTGMSDKELWSSGESRLDFYDLKGVVESLFASLNLTGIRYCSDALQAFLHPGRSCGIFIDEKSIGYMGEAHPDVLSRLDMKNRALIFEMDVDAISELFSGSVTYKEFSRYPESSRDVAFVIDQDVEADGMLNIALNAREELLENVCIFDVYAGAGVPEGKKSLGLRFTYRSYSATLTDDEVSRVHSKIVQRIIDQTGARVR.

Positions 39–147 (GPSFSNVVVA…PNLPLGEDLA (109 aa)) constitute a tRNA-binding domain. One can recognise a B5 domain in the interval 402–480 (ETVGEIHLRC…RIHGYDNIPV (79 aa)). Residues aspartate 458, aspartate 464, glutamate 467, and glutamate 468 each contribute to the Mg(2+) site. Residues 711–804 (SRYPESSRDV…IIDQTGARVR (94 aa)) form the FDX-ACB domain.

It belongs to the phenylalanyl-tRNA synthetase beta subunit family. Type 1 subfamily. As to quaternary structure, tetramer of two alpha and two beta subunits. Mg(2+) is required as a cofactor.

It is found in the cytoplasm. The enzyme catalyses tRNA(Phe) + L-phenylalanine + ATP = L-phenylalanyl-tRNA(Phe) + AMP + diphosphate + H(+). This Syntrophus aciditrophicus (strain SB) protein is Phenylalanine--tRNA ligase beta subunit.